A 331-amino-acid chain; its full sequence is RNA/RNP complex-1-interacting phosphatase (331 aa).

A Tyrosine-protein phosphatase domain is found at 61-208 (FEKHLAPEEC…LRNGPIRKNW (148 aa)). Residue Cys-152 is the Phosphocysteine intermediate of the active site. Residue 153-158 (THGVNR) participates in substrate binding. Arg-158 serves as the catalytic Proton donor/acceptor.

The protein belongs to the protein-tyrosine phosphatase family. Non-receptor class dual specificity subfamily. In terms of assembly, monomer. May interact with SFRS7 and SFRS9/SRP30C.

The protein resides in the nucleus. Its subcellular location is the nucleus speckle. Its function is as follows. Possesses RNA 5'-triphosphatase and diphosphatase activities, but displays a poor protein-tyrosine phosphatase activity. In addition, has phosphatase activity with ATP, ADP and O-methylfluorescein phosphate (in vitro). Binds to RNA. May participate in nuclear mRNA metabolism. This is RNA/RNP complex-1-interacting phosphatase (DUSP11) from Bos taurus (Bovine).